A 333-amino-acid chain; its full sequence is Abequosyltransferase RfbV (333 aa).

Belongs to the glycosyltransferase 2 family.

It carries out the reaction CDP-alpha-D-abequose + alpha-D-Man-(1-&gt;4)-alpha-L-Rha-(1-&gt;3)-alpha-D-Gal-di-trans,octa-cis-undecaprenyl diphosphate = alpha-D-Abe-(1-&gt;3)-alpha-D-Man-(1-&gt;4)-alpha-L-Rha-(1-&gt;3)-alpha-D-Gal-di-trans,octa-cis-undecaprenyl diphosphate + CDP + H(+). The protein operates within bacterial outer membrane biogenesis; LPS O-antigen biosynthesis. Catalyzes the transfer of CDP-abequose on D-mannosyl-L-rhamnosyl-D-galactose-1-diphospholipid to yield D-abequosyl-D-mannosyl-rhamnosyl-D-galactose-1-diphospholipid. In Salmonella typhimurium (strain LT2 / SGSC1412 / ATCC 700720), this protein is Abequosyltransferase RfbV (rfbV).